A 485-amino-acid chain; its full sequence is Probable trichothecene esterase SAT6 (485 aa).

Positions 1–23 (MPQDPNTTLQMSSSKPSLSDLSV) are disordered. Residues 9-23 (LQMSSSKPSLSDLSV) show a composition bias toward low complexity. Catalysis depends on charge relay system residues S262, D406, and H438.

This sequence belongs to the AB hydrolase superfamily. Lipase family.

It participates in mycotoxin biosynthesis. In terms of biological role, probable trichothecene esterase; part of the satratoxin SC1 cluster involved in the biosynthesis of satratoxins, trichothecene mycotoxins that are associated with human food poisonings. Satratoxins are suggested to be made by products of multiple gene clusters (SC1, SC2 and SC3) that encode 21 proteins in all, including polyketide synthases, acetyltransferases, and other enzymes expected to modify the trichothecene skeleton. SC1 encodes 10 proteins, SAT1 to SAT10. The largest are SAT8, which encodes a putative polyketide synthase (PKS) with a conventional non-reducing architecture, and SAT10, a putative protein containing four ankyrin repeats and thus may be involved in protein scaffolding. The putative short-chain reductase SAT3 may assist the PKS in some capacity. SAT6 contains a secretory lipase domain and acts probably as a trichothecene esterase. SAT5 encodes a putative acetyltransferase, and so, with SAT6, may affect endogenous protection from toxicity. The probable transcription factor SAT9 may regulate the expression of the SC1 cluster. SC2 encodes proteins SAT11 to SAT16, the largest of which encodes the putative reducing PKS SAT13. SAT11 is a cytochrome P450 monooxygenase, while SAT14 and SAT16 are probable acetyltransferases. The SC2 cluster may be regulated by the transcription factor SAT15. SC3 is a small cluster that encodes 5 proteins, SAT17 to SAT21. SAT21 is a putative MFS-type transporter which may have a role in exporting secondary metabolites. The four other proteins putatively encoded in SC3 include the taurine hydroxylase-like protein SAT17, the O-methyltransferase SAT18, the acetyltransferase SAT19, and the Cys6-type zinc finger SAT20, the latter being probably involved in regulation of SC3 expression. This is Probable trichothecene esterase SAT6 from Stachybotrys chartarum (strain CBS 109288 / IBT 7711) (Toxic black mold).